Consider the following 247-residue polypeptide: 2,3-bisphosphoglycerate-dependent phosphoglycerate mutase (247 aa).

Substrate is bound by residues 8 to 15 (RHGESQWN), 21 to 22 (TG), Arg60, 87 to 90 (ERHY), Lys98, 114 to 115 (RR), and 183 to 184 (GN). His9 acts as the Tele-phosphohistidine intermediate in catalysis. Residue Glu87 is the Proton donor/acceptor of the active site.

The protein belongs to the phosphoglycerate mutase family. BPG-dependent PGAM subfamily.

The enzyme catalyses (2R)-2-phosphoglycerate = (2R)-3-phosphoglycerate. It participates in carbohydrate degradation; glycolysis; pyruvate from D-glyceraldehyde 3-phosphate: step 3/5. Catalyzes the interconversion of 2-phosphoglycerate and 3-phosphoglycerate. In Chlorobium phaeobacteroides (strain BS1), this protein is 2,3-bisphosphoglycerate-dependent phosphoglycerate mutase.